The following is a 232-amino-acid chain: MSRRGKVYLNARGKVEAGRRYTLSEALALVTDTARAKFDETVEAAVRLGVNPAHADQMVRGSVVLPNGLGKTVRVLVFAKGEKEKEALDAGADYAGSDEFIEKIKSGWLEFDRVIATPDMMGNVGKLGKILGPRGLMPNPKVGTVTFDVATAVKEVKAGKVEFRVEKAGIVHSPVGKVSFGPDRLMENIQALIEMIIKLKPATSKGTYIKGIALSSTMGPGVRVDPLDLRNL.

This sequence belongs to the universal ribosomal protein uL1 family. Part of the 50S ribosomal subunit.

Functionally, binds directly to 23S rRNA. The L1 stalk is quite mobile in the ribosome, and is involved in E site tRNA release. Protein L1 is also a translational repressor protein, it controls the translation of the L11 operon by binding to its mRNA. This Syntrophus aciditrophicus (strain SB) protein is Large ribosomal subunit protein uL1.